Reading from the N-terminus, the 433-residue chain is tRNA(Ile)-lysidine synthase (433 aa).

37–42 (SGGKDS) is a binding site for ATP.

Belongs to the tRNA(Ile)-lysidine synthase family.

It localises to the cytoplasm. It carries out the reaction cytidine(34) in tRNA(Ile2) + L-lysine + ATP = lysidine(34) in tRNA(Ile2) + AMP + diphosphate + H(+). In terms of biological role, ligates lysine onto the cytidine present at position 34 of the AUA codon-specific tRNA(Ile) that contains the anticodon CAU, in an ATP-dependent manner. Cytidine is converted to lysidine, thus changing the amino acid specificity of the tRNA from methionine to isoleucine. This chain is tRNA(Ile)-lysidine synthase, found in Leptospira interrogans serogroup Icterohaemorrhagiae serovar Lai (strain 56601).